The sequence spans 293 residues: Bis(5'-nucleosyl)-tetraphosphatase, symmetrical (293 aa).

The protein belongs to the Ap4A hydrolase family.

It carries out the reaction P(1),P(4)-bis(5'-adenosyl) tetraphosphate + H2O = 2 ADP + 2 H(+). Hydrolyzes diadenosine 5',5'''-P1,P4-tetraphosphate to yield ADP. The protein is Bis(5'-nucleosyl)-tetraphosphatase, symmetrical of Pseudomonas fluorescens (strain Pf0-1).